The primary structure comprises 452 residues: Matrilin-3 (452 aa).

Positions 1-24 (MRRALGTLGCCLALLLPLLPAARG) are cleaved as a signal peptide. The VWFA domain maps to 54–229 (DLVFIIDSSR…GVIEKLTSKF (176 aa)). EGF-like domains lie at 235-275 (AANT…RTCS), 276-316 (AVDV…KTCS), 317-357 (AMDV…KTCS), and 358-398 (AVDV…KTCS). Cystine bridges form between Cys-239/Cys-250, Cys-246/Cys-259, Cys-261/Cys-274, Cys-280/Cys-291, Cys-287/Cys-300, Cys-302/Cys-315, Cys-321/Cys-332, Cys-328/Cys-341, Cys-343/Cys-356, Cys-362/Cys-373, Cys-369/Cys-382, and Cys-384/Cys-397. Asn-295 carries an N-linked (GlcNAc...) asparagine glycan. Residues 419–451 (ALQDSVTSRLEALSTKLDEVSQKLQAYQDRQQV) are a coiled coil.

Can form homooligomers (monomers, dimers, trimers and tetramers) and heterooligomers with matrilin-1. In terms of tissue distribution, expression is restricted to cartilaginous tissues.

It is found in the secreted. In terms of biological role, major component of the extracellular matrix of cartilage and may play a role in the formation of extracellular filamentous networks. The sequence is that of Matrilin-3 (MATN3) from Gallus gallus (Chicken).